The sequence spans 240 residues: Small ribosomal subunit protein uS3 (240 aa).

The KH type-2 domain occupies 39 to 107 (IREFIKEECK…ELHLNIVEVR (69 aa)). Residues 212–222 (PQARDRRHAEL) are compositionally biased toward basic and acidic residues. A disordered region spans residues 212–240 (PQARDRRHAELQEGGGPRPQGGGRPRRDR). A compositionally biased stretch (gly residues) spans 224 to 234 (EGGGPRPQGGG).

This sequence belongs to the universal ribosomal protein uS3 family. As to quaternary structure, part of the 30S ribosomal subunit. Forms a tight complex with proteins S10 and S14.

In terms of biological role, binds the lower part of the 30S subunit head. Binds mRNA in the 70S ribosome, positioning it for translation. The sequence is that of Small ribosomal subunit protein uS3 from Dinoroseobacter shibae (strain DSM 16493 / NCIMB 14021 / DFL 12).